Here is a 313-residue protein sequence, read N- to C-terminus: Hsp90 co-chaperone Cdc37-like 1 (313 aa).

This sequence belongs to the CDC37 family. In terms of assembly, forms complexes with Hsp70 and Hsp90.

Its subcellular location is the cytoplasm. In terms of biological role, co-chaperone that binds to numerous proteins and promotes their interaction with Hsp70 and Hsp90. The polypeptide is Hsp90 co-chaperone Cdc37-like 1 (cdc37l1) (Danio rerio (Zebrafish)).